The primary structure comprises 237 residues: uncharacterized protein (237 aa).

A disordered region spans residues 213–237 (GQGKYLKLDSNTTENKTTKQNETGG). Residues 223 to 237 (NTTENKTTKQNETGG) are compositionally biased toward low complexity.

This is an uncharacterized protein from Methanothermobacter thermautotrophicus (Methanobacterium thermoformicicum).